The sequence spans 360 residues: uncharacterized protein (360 aa).

Residues 11–40 form the 4Fe-4S ferredoxin-type domain; that stretch reads KEEVWDTNRCSGCGACVAVCPVNNLYFREE.

The protein belongs to the FrhB family.

This is an uncharacterized protein from Methanocaldococcus jannaschii (strain ATCC 43067 / DSM 2661 / JAL-1 / JCM 10045 / NBRC 100440) (Methanococcus jannaschii).